A 1222-amino-acid polypeptide reads, in one-letter code: ATP-dependent helicase/nuclease subunit A (1222 aa).

In terms of domain architecture, UvrD-like helicase ATP-binding spans Q39–Q495. A60–T67 contributes to the ATP binding site. Positions Q524–G810 constitute a UvrD-like helicase C-terminal domain.

Belongs to the helicase family. AddA subfamily. As to quaternary structure, heterodimer of AddA and AddB/RexB. Requires Mg(2+) as cofactor.

It carries out the reaction Couples ATP hydrolysis with the unwinding of duplex DNA by translocating in the 3'-5' direction.. The catalysed reaction is ATP + H2O = ADP + phosphate + H(+). The heterodimer acts as both an ATP-dependent DNA helicase and an ATP-dependent, dual-direction single-stranded exonuclease. Recognizes the chi site generating a DNA molecule suitable for the initiation of homologous recombination. The AddA nuclease domain is required for chi fragment generation; this subunit has the helicase and 3' -&gt; 5' nuclease activities. In Streptococcus pyogenes serotype M2 (strain MGAS10270), this protein is ATP-dependent helicase/nuclease subunit A.